Consider the following 249-residue polypeptide: ATP synthase subunit a 1 (249 aa).

The next 6 membrane-spanning stretches (helical) occupy residues 26 to 46 (FTNVSAFMVATVVVASGFLYL), 84 to 104 (FFPFVFSLFMFVLVANFLGLF), 114 to 134 (IIVTFALAVLVIGTVIVYGFF), 143 to 163 (LFVPSGVPGIIVPLVVAIEII), 193 to 213 (FVVSLAALGPIGIGGAVLPLI), and 216 to 236 (VAITALEFLVAFLQAYVFTVL).

This sequence belongs to the ATPase A chain family. In terms of assembly, F-type ATPases have 2 components, CF(1) - the catalytic core - and CF(0) - the membrane proton channel. CF(1) has five subunits: alpha(3), beta(3), gamma(1), delta(1), epsilon(1). CF(0) has three main subunits: a(1), b(2) and c(9-12). The alpha and beta chains form an alternating ring which encloses part of the gamma chain. CF(1) is attached to CF(0) by a central stalk formed by the gamma and epsilon chains, while a peripheral stalk is formed by the delta and b chains.

The protein localises to the cell inner membrane. Functionally, key component of the proton channel; it plays a direct role in the translocation of protons across the membrane. This Brucella anthropi (strain ATCC 49188 / DSM 6882 / CCUG 24695 / JCM 21032 / LMG 3331 / NBRC 15819 / NCTC 12168 / Alc 37) (Ochrobactrum anthropi) protein is ATP synthase subunit a 1.